The primary structure comprises 310 residues: Malate dehydrogenase (310 aa).

NAD(+) is bound by residues 7 to 12 (GAGNVG) and aspartate 32. Substrate-binding residues include arginine 81 and arginine 87. NAD(+)-binding positions include asparagine 94 and 117–119 (VSN). Substrate is bound by residues asparagine 119 and arginine 150. The active-site Proton acceptor is the histidine 174.

It belongs to the LDH/MDH superfamily. MDH type 3 family. As to quaternary structure, homotetramer; arranged as a dimer of dimers.

It carries out the reaction (S)-malate + NAD(+) = oxaloacetate + NADH + H(+). Catalyzes the reversible oxidation of malate to oxaloacetate. The chain is Malate dehydrogenase from Prosthecochloris vibrioformis (Chlorobium vibrioforme).